The following is a 648-amino-acid chain: Probable alpha-galactosidase D (648 aa).

The first 17 residues, 1-17 (MESIVWLLLLSPALVAG), serve as a signal peptide directing secretion. Residues Asn84 and Asn90 are each glycosylated (N-linked (GlcNAc...) asparagine). Cysteines 123 and 156 form a disulfide. The Nucleophile role is filled by Asp154. Substrate is bound at residue 199 to 203 (EWGID). The active-site Proton donor is the Asp221. N-linked (GlcNAc...) asparagine glycans are attached at residues Asn339, Asn505, and Asn572.

The protein belongs to the glycosyl hydrolase 27 family.

It is found in the secreted. It carries out the reaction Hydrolysis of terminal, non-reducing alpha-D-galactose residues in alpha-D-galactosides, including galactose oligosaccharides, galactomannans and galactolipids.. Its function is as follows. Hydrolyzes a variety of simple alpha-D-galactoside as well as more complex molecules such as oligosaccharides and polysaccharides. The protein is Probable alpha-galactosidase D (aglD) of Neosartorya fischeri (strain ATCC 1020 / DSM 3700 / CBS 544.65 / FGSC A1164 / JCM 1740 / NRRL 181 / WB 181) (Aspergillus fischerianus).